The following is a 528-amino-acid chain: MGIAKMTNKLSLLLQKPYVHHQLSVAELVEKVLHRNEGRLTHTGAVAVTTGKYTGRSPKDKYIVEEPSTKQNIDWGTVNQPMAPETFQKLYDKVLDYLMKKDELFVFKGFAGADPKARLPIQVVNEFAWHNLFVHQLFIRPSAEELADHEPQFTVICAPNFKADPAVDGTRSEAFIIISFEQRTVLIGGTEYAGEMKKSIFSVMNYLLPEQGILPMHCSANVGQEGDVALFFGLSGTGKTTLSTDPKRRLIGDDEHGWSSRGIFNIEGGCYAKCINLSREKEPQIFDAIGFGAVLENVILHDATRVPDYDDGTLTENTRAAYPLQAIKNIVDPSVAGHPSTIVFLTADAFGVLPPISKLTREQAMYHFLSGYTSKLAGTERGVTEPEATFSTCFGAPFLPRPAVEYAEMLGQKIAEHNVRVFLVNTGWTGGPYGVGSRMKLAYTRAMVQAAVEGELDNVETVQDPIFGLAIPAHVPGVPDDVLRPQNTWADKQAYEQKAKELAEKFRANFQKFAHIDPSIEKLGGPLV.

Positions 56, 192, and 198 each coordinate substrate. ATP contacts are provided by residues Lys-198, His-217, and 233–241 (GLSGTGKTT). Mn(2+) contacts are provided by Lys-198 and His-217. Asp-254 contributes to the Mn(2+) binding site. ATP contacts are provided by Glu-282, Arg-319, and Thr-444. Substrate is bound at residue Arg-319.

The protein belongs to the phosphoenolpyruvate carboxykinase (ATP) family. It depends on Mn(2+) as a cofactor.

The protein resides in the cytoplasm. It catalyses the reaction oxaloacetate + ATP = phosphoenolpyruvate + ADP + CO2. It participates in carbohydrate biosynthesis; gluconeogenesis. Its function is as follows. Involved in the gluconeogenesis. Catalyzes the conversion of oxaloacetate (OAA) to phosphoenolpyruvate (PEP) through direct phosphoryl transfer between the nucleoside triphosphate and OAA. This Geobacillus thermodenitrificans (strain NG80-2) protein is Phosphoenolpyruvate carboxykinase (ATP).